The sequence spans 203 residues: Histidine biosynthesis bifunctional protein HisIE (203 aa).

Positions Met1–Phe114 are phosphoribosyl-AMP cyclohydrolase. The tract at residues Leu115 to Gln203 is phosphoribosyl-ATP pyrophosphohydrolase.

This sequence in the N-terminal section; belongs to the PRA-CH family. The protein in the C-terminal section; belongs to the PRA-PH family.

The protein resides in the cytoplasm. The catalysed reaction is 1-(5-phospho-beta-D-ribosyl)-ATP + H2O = 1-(5-phospho-beta-D-ribosyl)-5'-AMP + diphosphate + H(+). It carries out the reaction 1-(5-phospho-beta-D-ribosyl)-5'-AMP + H2O = 1-(5-phospho-beta-D-ribosyl)-5-[(5-phospho-beta-D-ribosylamino)methylideneamino]imidazole-4-carboxamide. It participates in amino-acid biosynthesis; L-histidine biosynthesis; L-histidine from 5-phospho-alpha-D-ribose 1-diphosphate: step 2/9. It functions in the pathway amino-acid biosynthesis; L-histidine biosynthesis; L-histidine from 5-phospho-alpha-D-ribose 1-diphosphate: step 3/9. In Shigella flexneri, this protein is Histidine biosynthesis bifunctional protein HisIE (hisI).